A 216-amino-acid chain; its full sequence is Thymidylate kinase (216 aa).

10–17 (GIDGCGKT) lines the ATP pocket.

This sequence belongs to the thymidylate kinase family.

It catalyses the reaction dTMP + ATP = dTDP + ADP. Phosphorylation of dTMP to form dTDP in both de novo and salvage pathways of dTTP synthesis. The sequence is that of Thymidylate kinase from Prochlorococcus marinus (strain MIT 9313).